A 521-amino-acid chain; its full sequence is Acetylcholine receptor subunit delta (521 aa).

The first 21 residues, 1-21, serve as a signal peptide directing secretion; sequence MAWIWISLLLPILIYFPGCFS. Residues 22–247 are Extracellular-facing; sequence ESEEERLLNH…ITFYLIIERK (226 aa). Residues Asn-53 and Asn-164 are each glycosylated (N-linked (GlcNAc...) asparagine). A disulfide bond links Cys-151 and Cys-165. The next 3 helical transmembrane spans lie at 248-272, 280-297, and 314-335; these read PLFYIINILAPCVLIALMANLVFYL, MTLAISVLLAQSVFLLLI, and YLMFIMVLVTIVVVSCVIVLNL. Over 336 to 475 the chain is Cytoplasmic; that stretch reads HFRTPSTHAI…WYRIARTVDR (140 aa). At Tyr-394 the chain carries Phosphotyrosine; by Tyr-kinases. Residues 476–494 form a helical membrane-spanning segment; sequence LCLFLVTPVMIIGTLWIFL.

The protein belongs to the ligand-gated ion channel (TC 1.A.9) family. Acetylcholine receptor (TC 1.A.9.1) subfamily. Pentamer of two alpha chains, and one each of the beta, delta, and gamma (in immature muscle) or epsilon (in mature muscle) chains.

The protein localises to the postsynaptic cell membrane. Its subcellular location is the cell membrane. The catalysed reaction is K(+)(in) = K(+)(out). The enzyme catalyses Na(+)(in) = Na(+)(out). Its function is as follows. After binding acetylcholine, the AChR responds by an extensive change in conformation that affects all subunits and leads to opening of an ion-conducting channel across the plasma membrane. The chain is Acetylcholine receptor subunit delta (chrnd) from Xenopus laevis (African clawed frog).